The chain runs to 584 residues: Segmentation polarity homeobox protein engrailed (584 aa).

Disordered regions lie at residues 1 to 27, 141 to 198, 343 to 380, 392 to 451, and 465 to 492; these read MALE…PQQH, EESD…SKPS, IGQA…SSST, CSSA…GGKN, and DRPS…PRTA. Positions 12–23 are enriched in pro residues; sequence APSPPGCLPHSP. The segment covering 160-174 has biased composition (acidic residues); the sequence is TEEDEEEDDDIDVDD. The segment covering 189–198 has biased composition (polar residues); the sequence is HQQSKQSKPS. Low complexity-rich tracts occupy residues 348 to 380 and 392 to 405; these read STTP…SSST and CSSA…SPSS. A compositionally biased stretch (basic and acidic residues) spans 478–489; the sequence is QPKDKTNDEKRP. The homeobox DNA-binding region spans 486–545; the sequence is EKRPRTAFSSEQLARLKREFNENRYLTERRRQQLSSELGLNEAQIKIWFQNKRAKIKKST.

It belongs to the engrailed homeobox family.

It localises to the nucleus. Its function is as follows. This protein specifies the body segmentation pattern. It is required for the development of the central nervous system. Transcriptional regulator that repress activated promoters. This Drosophila virilis (Fruit fly) protein is Segmentation polarity homeobox protein engrailed (en).